We begin with the raw amino-acid sequence, 624 residues long: Cell pattern formation-associated protein ust1 (624 aa).

2 disordered regions span residues 1 to 24 and 43 to 99; these read MSTA…APTG and RSGS…GHSS. Residues 43 to 62 show a composition bias toward low complexity; the sequence is RSGSVPASASGSAPGSASGS. A compositionally biased stretch (basic residues) spans 70-85; that stretch reads QHHTGHHHYSAHHTHS. An HTH APSES-type domain is found at 233 to 339; that stretch reads RVTTTLWEDE…PNIQSFLYHP (107 aa). Residues 267-288 constitute a DNA-binding region (H-T-H motif); it reads GTKLLNVCGMSRGKRDGILKNE. The segment covering 352-362 has biased composition (low complexity); the sequence is AQERQAQRQRA. Disordered regions lie at residues 352-456, 474-504, and 538-624; these read AQER…QQQQ, QQAY…LNNS, and SWND…IHHE. Residues 369–391 show a composition bias toward polar residues; it reads PGANGTSQAPPLMRANTTPSNGD. The span at 392–426 shows a compositional bias: low complexity; it reads TSTFSSGLSSLGSWTGSHDQGHASAPTTAQPSPSS. Positions 427–451 are enriched in polar residues; that stretch reads MHNGATQMHMSLSNHGTASPTYAQS. Residues 571 to 587 are compositionally biased toward basic and acidic residues; it reads LDGDDLHSPDSSDDRLA. The span at 615-624 shows a compositional bias: gly residues; sequence VGNGSGIHHE.

This sequence belongs to the EFG1/PHD1/stuA family. In terms of processing, phosphorylated but is not a target of cAMP signaling.

The protein resides in the nucleus. Functionally, transcription factor that regulates asexual reproduction. Binds the StuA-response elements (StRE) with the consensus sequence 5'-(A/T)CGCG(T/A)N(A/C)-3' at the promoters of target genes. Regulates dimorphism, virulence, and the sporulation program. Required for mating, gall induction, and sporogenesis in maize tissue. Regulates expression of the filament-down-regulated gene UM00205 and the teliospore-specific gene ssp1. In Mycosarcoma maydis (Corn smut fungus), this protein is Cell pattern formation-associated protein ust1 (ust1).